A 1154-amino-acid polypeptide reads, in one-letter code: BEACH domain-containing protein lvsF (1154 aa).

Disordered stretches follow at residues 92–123 and 139–167; these read HLPTPQPIPQSILSPSKPTPTPTPPIVVEQPS and TSKVTTPTPPTPTPTPPTPQPTSIAPTPT. The segment covering 145 to 158 has biased composition (pro residues); sequence PTPPTPTPTPPTPQ. A BEACH-type PH domain is found at 289-384; the sequence is DMNERNILEL…TRNQVYDLLV (96 aa). The 309-residue stretch at 389-697 folds into the BEACH domain; it reads TNIMHINEQA…QIFKTPHPQR (309 aa). Disordered stretches follow at residues 554–575, 739–762, and 779–825; these read SFESSSSSRNGGGGDDDDNFEN, NNLNNNNNNNNNNNSNSNSNLNNN, and NSLN…ENLN. Composition is skewed to low complexity over residues 779–788 and 795–822; these read NSLNNENNEN and NSNSNSSDNIKNSNGFENNDNNFNNENE. 7 WD repeats span residues 858–897, 900–939, 942–980, 992–1031, 1034–1074, 1076–1110, and 1119–1154; these read LHKDKISALYLSNNSETIYSVSLDSCLKIYSLKEKRQIRS, LCNLALSSFQLSKDEKYIIIGSWDNNIYVYSVGNGSISYS, GHSDAVSCLKLHNNNILVSGSWDSSVKVWRTHRQSNGAI, DSDTEIRSIDISSNGTIFCAGSSDGYLYFYDLLTLQLIRR, CFFD…FSFK, KGEIHCLDSDGSSLIIGTDRGLCLWSLTTGTEIKD, and SSNESIHSLNVSINQSSNKPILLTGTEAGSISIWQQ.

This is BEACH domain-containing protein lvsF (lvsF) from Dictyostelium discoideum (Social amoeba).